A 161-amino-acid chain; its full sequence is 6,7-dimethyl-8-ribityllumazine synthase (161 aa).

5-amino-6-(D-ribitylamino)uracil contacts are provided by residues Trp31, 63 to 65 (SFE), and 85 to 87 (VVI). Residue 90-91 (GT) participates in (2S)-2-hydroxy-3-oxobutyl phosphate binding. The Proton donor role is filled by His93. Phe118 provides a ligand contact to 5-amino-6-(D-ribitylamino)uracil. Residue Arg132 participates in (2S)-2-hydroxy-3-oxobutyl phosphate binding.

The protein belongs to the DMRL synthase family.

It carries out the reaction (2S)-2-hydroxy-3-oxobutyl phosphate + 5-amino-6-(D-ribitylamino)uracil = 6,7-dimethyl-8-(1-D-ribityl)lumazine + phosphate + 2 H2O + H(+). It functions in the pathway cofactor biosynthesis; riboflavin biosynthesis; riboflavin from 2-hydroxy-3-oxobutyl phosphate and 5-amino-6-(D-ribitylamino)uracil: step 1/2. Catalyzes the formation of 6,7-dimethyl-8-ribityllumazine by condensation of 5-amino-6-(D-ribitylamino)uracil with 3,4-dihydroxy-2-butanone 4-phosphate. This is the penultimate step in the biosynthesis of riboflavin. The sequence is that of 6,7-dimethyl-8-ribityllumazine synthase from Pseudarthrobacter chlorophenolicus (strain ATCC 700700 / DSM 12829 / CIP 107037 / JCM 12360 / KCTC 9906 / NCIMB 13794 / A6) (Arthrobacter chlorophenolicus).